A 90-amino-acid chain; its full sequence is Probable Fe(2+)-trafficking protein (90 aa).

Belongs to the Fe(2+)-trafficking protein family.

Could be a mediator in iron transactions between iron acquisition and iron-requiring processes, such as synthesis and/or repair of Fe-S clusters in biosynthetic enzymes. This Vibrio atlanticus (strain LGP32) (Vibrio splendidus (strain Mel32)) protein is Probable Fe(2+)-trafficking protein.